An 88-amino-acid polypeptide reads, in one-letter code: Platelet factor 4 (88 aa).

A glycan (O-linked (GalNAc...) threonine) is linked at threonine 7. Intrachain disulfides connect cysteine 25–cysteine 51 and cysteine 27–cysteine 67. A Phosphoserine modification is found at serine 41. 76–82 (KKILKKL) contributes to the heparin binding site.

The protein belongs to the intercrine alpha (chemokine CxC) family. Homotetramer. Interacts with TNFAIP6 (via Link domain). Interacts with CCR1. Interacts with CXCR3. Interacts with THBD; this interaction enhances generation of activated protein C. Post-translationally, O-linked glycan consists of Gal-GalNAc disaccharide which is modified with sialic acid residues (microheterogeneity).

The protein resides in the secreted. Its function is as follows. Chemokine released during platelet aggregation that plays a role in different biological processes including hematopoiesis, cell proliferation, differentiation, and activation. Acts via different functional receptors including CCR1, CXCR3A or CXCR3B. Upon interaction with CXCR3A receptor, induces activated T-lymphocytes migration mediated via downstream Ras/extracellular signal-regulated kinase (ERK) signaling. Neutralizes the anticoagulant effect of heparin by binding more strongly to heparin than to the chondroitin-4-sulfate chains of the carrier molecule. Plays a role in the inhibition of hematopoiesis and in the maintenance of hematopoietic stem cell (HSC) quiescence. Chemotactic for neutrophils and monocytes via CCR1. Inhibits endothelial cell proliferation. In cooperation with toll-like receptor 8/TLR8, induces chromatin remodeling and activates inflammatory gene expression via the TBK1-IRF5 axis. In addition, induces myofibroblast differentiation and collagen synthesis in different precursor cells, including endothelial cells, by stimulating endothelial-to-mesenchymal transition. Interacts with thrombomodulin/THBD to enhance the activation of protein C and thus potentiates its anticoagulant activity. The polypeptide is Platelet factor 4 (PF4) (Bos taurus (Bovine)).